The primary structure comprises 366 residues: Probable dual-specificity RNA methyltransferase RlmN (366 aa).

The Proton acceptor role is filled by glutamate 107. Residues 113–342 form the Radical SAM core domain; the sequence is AEERMTACLS…MAQKFHVTVR (230 aa). Cysteines 120 and 353 form a disulfide. Residues cysteine 127, cysteine 131, and cysteine 134 each coordinate [4Fe-4S] cluster. S-adenosyl-L-methionine-binding positions include 177–178, serine 210, 233–235, and asparagine 310; these read GE and SLH. Residue cysteine 353 is the S-methylcysteine intermediate of the active site.

The protein belongs to the radical SAM superfamily. RlmN family. [4Fe-4S] cluster is required as a cofactor.

The protein resides in the cytoplasm. It catalyses the reaction adenosine(2503) in 23S rRNA + 2 reduced [2Fe-2S]-[ferredoxin] + 2 S-adenosyl-L-methionine = 2-methyladenosine(2503) in 23S rRNA + 5'-deoxyadenosine + L-methionine + 2 oxidized [2Fe-2S]-[ferredoxin] + S-adenosyl-L-homocysteine. It carries out the reaction adenosine(37) in tRNA + 2 reduced [2Fe-2S]-[ferredoxin] + 2 S-adenosyl-L-methionine = 2-methyladenosine(37) in tRNA + 5'-deoxyadenosine + L-methionine + 2 oxidized [2Fe-2S]-[ferredoxin] + S-adenosyl-L-homocysteine. Specifically methylates position 2 of adenine 2503 in 23S rRNA and position 2 of adenine 37 in tRNAs. This is Probable dual-specificity RNA methyltransferase RlmN from Chlorobium chlorochromatii (strain CaD3).